The chain runs to 151 residues: Transcriptional repressor NrdR (151 aa).

A zinc finger lies at 3 to 34; that stretch reads CPFCNAQDTKVIDSRLVSEGSQVRRRRSCNEC. The region spanning 49 to 139 is the ATP-cone domain; the sequence is PRLIKSDGRR…VYRSFKDVKE (91 aa).

It belongs to the NrdR family. Zn(2+) serves as cofactor.

Negatively regulates transcription of bacterial ribonucleotide reductase nrd genes and operons by binding to NrdR-boxes. This chain is Transcriptional repressor NrdR, found in Psychromonas ingrahamii (strain DSM 17664 / CCUG 51855 / 37).